Here is a 224-residue protein sequence, read N- to C-terminus: Ribosomal RNA small subunit methyltransferase I (224 aa).

The protein belongs to the methyltransferase superfamily. RsmI family.

It localises to the cytoplasm. It carries out the reaction cytidine(1402) in 16S rRNA + S-adenosyl-L-methionine = 2'-O-methylcytidine(1402) in 16S rRNA + S-adenosyl-L-homocysteine + H(+). Catalyzes the 2'-O-methylation of the ribose of cytidine 1402 (C1402) in 16S rRNA. The chain is Ribosomal RNA small subunit methyltransferase I from Borrelia garinii subsp. bavariensis (strain ATCC BAA-2496 / DSM 23469 / PBi) (Borreliella bavariensis).